We begin with the raw amino-acid sequence, 140 residues long: MNINPLIYFSSSSSNSHRFVQKLEIPAFRIPINQSDSPLNITSPYILLTPSYGGGSTKGAVPPQVIRFLNIAENRAFIRGVIAAGNTNFGEAYGIAGRIISEKCRIPLLYRFELLGTEEDVQRVRQGIQRFWQHDSLENM.

Belongs to the NrdI family.

Functionally, probably involved in ribonucleotide reductase function. This Photorhabdus laumondii subsp. laumondii (strain DSM 15139 / CIP 105565 / TT01) (Photorhabdus luminescens subsp. laumondii) protein is Protein NrdI.